The following is a 255-amino-acid chain: Ribosome maturation factor RimP (255 aa).

The disordered stretch occupies residues 177 to 255; sequence LRRGSAPPQD…ARLKNRDTLH (79 aa). Residues 186–202 are compositionally biased toward acidic residues; the sequence is DGEDVDEEAGEAPEDEV. Residues 216-230 are compositionally biased toward basic and acidic residues; sequence PKMDKKSDKKSDKPV.

It belongs to the RimP family.

Its subcellular location is the cytoplasm. In terms of biological role, required for maturation of 30S ribosomal subunits. This chain is Ribosome maturation factor RimP, found in Methylorubrum populi (strain ATCC BAA-705 / NCIMB 13946 / BJ001) (Methylobacterium populi).